The sequence spans 193 residues: uncharacterized protein (193 aa).

Arg-8 is a binding site for substrate. The active-site Tele-phosphohistidine intermediate is the His-9. Residues Asn-15, Gln-21, and Arg-58 each contribute to the substrate site. The Proton donor/acceptor role is filled by Glu-82. Residue His-139 participates in substrate binding.

The protein belongs to the phosphoglycerate mutase family. GpmB subfamily.

Its function is as follows. Phosphatase with broad substrate specificity. Does not have phosphoglycerate mutase activity. This is an uncharacterized protein from Bacillus subtilis (strain 168).